The following is a 98-amino-acid chain: NADH-ubiquinone oxidoreductase chain 4L (98 aa).

3 helical membrane passes run 1 to 21 (MIPTYMNIMLAFTISLLGMLT), 27 to 47 (VASLLCLEGMTMSLFIMTALI), and 61 to 81 (IILLVFAACEAAVGLALLISI).

It belongs to the complex I subunit 4L family. Core subunit of respiratory chain NADH dehydrogenase (Complex I) which is composed of 45 different subunits.

It localises to the mitochondrion inner membrane. The enzyme catalyses a ubiquinone + NADH + 5 H(+)(in) = a ubiquinol + NAD(+) + 4 H(+)(out). In terms of biological role, core subunit of the mitochondrial membrane respiratory chain NADH dehydrogenase (Complex I) which catalyzes electron transfer from NADH through the respiratory chain, using ubiquinone as an electron acceptor. Part of the enzyme membrane arm which is embedded in the lipid bilayer and involved in proton translocation. This Macaca sylvanus (Barbary macaque) protein is NADH-ubiquinone oxidoreductase chain 4L (MT-ND4L).